The chain runs to 478 residues: Protein nucleotidyltransferase YdiU (478 aa).

8 residues coordinate ATP: Gly-84, Gly-86, Arg-87, Lys-107, Asp-119, Gly-120, Arg-170, and Arg-177. The active-site Proton acceptor is the Asp-246. Residues Asn-247 and Asp-256 each contribute to the Mg(2+) site. Asp-256 lines the ATP pocket.

Belongs to the SELO family. Mg(2+) serves as cofactor. Mn(2+) is required as a cofactor.

It catalyses the reaction L-seryl-[protein] + ATP = 3-O-(5'-adenylyl)-L-seryl-[protein] + diphosphate. The catalysed reaction is L-threonyl-[protein] + ATP = 3-O-(5'-adenylyl)-L-threonyl-[protein] + diphosphate. The enzyme catalyses L-tyrosyl-[protein] + ATP = O-(5'-adenylyl)-L-tyrosyl-[protein] + diphosphate. It carries out the reaction L-histidyl-[protein] + UTP = N(tele)-(5'-uridylyl)-L-histidyl-[protein] + diphosphate. It catalyses the reaction L-seryl-[protein] + UTP = O-(5'-uridylyl)-L-seryl-[protein] + diphosphate. The catalysed reaction is L-tyrosyl-[protein] + UTP = O-(5'-uridylyl)-L-tyrosyl-[protein] + diphosphate. Functionally, nucleotidyltransferase involved in the post-translational modification of proteins. It can catalyze the addition of adenosine monophosphate (AMP) or uridine monophosphate (UMP) to a protein, resulting in modifications known as AMPylation and UMPylation. The protein is Protein nucleotidyltransferase YdiU of Escherichia coli O6:K15:H31 (strain 536 / UPEC).